A 166-amino-acid polypeptide reads, in one-letter code: Lipoprotein signal peptidase (166 aa).

Transmembrane regions (helical) follow at residues 11–31, 42–62, 67–87, and 90–110; these read VWLW…TLVV, LLPV…SFLS, WQRW…VWWL, and LPAT…GAIG. Active-site residues include aspartate 123 and aspartate 141. Residues 133–153 traverse the membrane as a helical segment; sequence HFPVFNVADCAICIGAALLLF.

The protein belongs to the peptidase A8 family.

It is found in the cell inner membrane. It carries out the reaction Release of signal peptides from bacterial membrane prolipoproteins. Hydrolyzes -Xaa-Yaa-Zaa-|-(S,diacylglyceryl)Cys-, in which Xaa is hydrophobic (preferably Leu), and Yaa (Ala or Ser) and Zaa (Gly or Ala) have small, neutral side chains.. Its pathway is protein modification; lipoprotein biosynthesis (signal peptide cleavage). This protein specifically catalyzes the removal of signal peptides from prolipoproteins. The polypeptide is Lipoprotein signal peptidase (Pseudoalteromonas translucida (strain TAC 125)).